The chain runs to 98 residues: Co-chaperonin GroES (98 aa).

The interval 35–57 (EKPQEGKVISAGPGRVDDKGTRV) is disordered.

It belongs to the GroES chaperonin family. As to quaternary structure, heptamer of 7 subunits arranged in a ring. Interacts with the chaperonin GroEL.

The protein localises to the cytoplasm. Functionally, together with the chaperonin GroEL, plays an essential role in assisting protein folding. The GroEL-GroES system forms a nano-cage that allows encapsulation of the non-native substrate proteins and provides a physical environment optimized to promote and accelerate protein folding. GroES binds to the apical surface of the GroEL ring, thereby capping the opening of the GroEL channel. In Cutibacterium acnes (strain DSM 16379 / KPA171202) (Propionibacterium acnes), this protein is Co-chaperonin GroES.